The sequence spans 98 residues: MTARFMTDPHAMRDMAGRFEMHAQTVEDEARKMWASSQNIAGAGWSGMASATSLDTMGQMNTAFRNIVNMLHSVRDGLVRDANNYEQQEQASQQVLRG.

It belongs to the WXG100 family. CFP-10 subfamily.

It is found in the secreted. Functionally, alters the host macrophage cytoskeleton and enhances macrophage motility. Promotes granuloma efflux, extrapulmonary dissemination of infection and bone disease. This chain is ESAT-6-like protein EsxM, found in Mycobacterium marinum (strain ATCC BAA-535 / M).